Reading from the N-terminus, the 86-residue chain is MKNLIAELLFKLAQKEEESKELCAQVEALEIIVTAMLRNMAQNDQQRVIDQVEGALYEVKPDASIPDDDTELLRDYVKKLLKHPRQ.

Positions 1–36 form a coiled coil; the sequence is MKNLIAELLFKLAQKEEESKELCAQVEALEIIVTAM.

The protein belongs to the IraP family. As to quaternary structure, interacts with RssB.

It is found in the cytoplasm. Functionally, inhibits RpoS proteolysis by regulating RssB activity, thereby increasing the stability of the sigma stress factor RpoS especially during phosphate starvation, but also in stationary phase and during nitrogen starvation. Its effect on RpoS stability is due to its interaction with RssB, which probably blocks the interaction of RssB with RpoS, and the consequent delivery of the RssB-RpoS complex to the ClpXP protein degradation pathway. The polypeptide is Anti-adapter protein IraP (Escherichia coli (strain SE11)).